Reading from the N-terminus, the 480-residue chain is Bifunctional pantoate ligase/cytidylate kinase (480 aa).

The pantoate--beta-alanine ligase stretch occupies residues 1–243 (MPTMGGLHQG…CGTTRLIDHV (243 aa)). 4–11 (MGGLHQGH) is a binding site for ATP. Residue H11 is the Proton donor of the active site. Q34 contributes to the (R)-pantoate binding site. Q34 contacts beta-alanine. 123 to 126 (GEKD) contacts ATP. Residue Q129 participates in (R)-pantoate binding. Residues V152 and 160–163 (LSSR) contribute to the ATP site. A cytidylate kinase region spans residues 244–480 (FLMTRQPLVA…GEEAWPTPAG (237 aa)).

In the N-terminal section; belongs to the pantothenate synthetase family. This sequence in the C-terminal section; belongs to the cytidylate kinase family. Type 1 subfamily.

It localises to the cytoplasm. The catalysed reaction is (R)-pantoate + beta-alanine + ATP = (R)-pantothenate + AMP + diphosphate + H(+). It catalyses the reaction CMP + ATP = CDP + ADP. The enzyme catalyses dCMP + ATP = dCDP + ADP. It functions in the pathway cofactor biosynthesis; (R)-pantothenate biosynthesis; (R)-pantothenate from (R)-pantoate and beta-alanine: step 1/1. Its function is as follows. Catalyzes the condensation of pantoate with beta-alanine in an ATP-dependent reaction via a pantoyl-adenylate intermediate. Catalyzes the transfer of a phosphate group from ATP to either CMP or dCMP to form CDP or dCDP and ADP, respectively. The protein is Bifunctional pantoate ligase/cytidylate kinase of Synechococcus sp. (strain CC9605).